We begin with the raw amino-acid sequence, 793 residues long: Sucrose synthase (793 aa).

The GT-B glycosyltransferase stretch occupies residues 259–738 (MILNIAIISP…AIKRVTEKYS (480 aa)).

The protein belongs to the glycosyltransferase 1 family. Homotetramer.

The enzyme catalyses an NDP-alpha-D-glucose + D-fructose = a ribonucleoside 5'-diphosphate + sucrose + H(+). Functionally, catalyzes the reversible conversion of sucrose and a nucleotide disphosphate (NDP) into fructose and NDP-glucose; although the reaction is freely reversible in vitro, the physiological reaction seems to be sucrose cleavage. Unlike characterized plant enzymes prefers ADP as a cosubstrate, whereas plants prefer UDP. Its preference for ADP over UDP suggests it may directly link sucrose and glycogen metabolism. This Melioribacter roseus (strain JCM 17771 / P3M-2) protein is Sucrose synthase.